Here is a 181-residue protein sequence, read N- to C-terminus: Histone H1 (181 aa).

2 disordered regions span residues 1–23 (MTET…THPP) and 81–181 (TKGA…PKKK). The segment covering 8–19 (KPKKVSKPKAKP) has biased composition (basic residues). The H15 domain occupies 20–94 (THPPTSVMVM…GASGSFKLAA (75 aa)). Composition is skewed to basic residues over residues 103 to 119 (AVAK…KAAA) and 145 to 181 (KPKK…PKKK).

Belongs to the histone H1/H5 family.

The protein localises to the nucleus. It is found in the chromosome. Functionally, histones H1 are necessary for the condensation of nucleosome chains into higher-order structures. This chain is Histone H1, found in Tigriopus californicus (Marine copepod).